The sequence spans 696 residues: SLIT and NTRK-like protein 1 (696 aa).

An N-terminal signal peptide occupies residues M1 to G17. One can recognise an LRRNT 1 domain in the interval N18–T57. Residues N18 to P622 lie on the Extracellular side of the membrane. LRR repeat units follow at residues Q59–N80, N83–G104, Q106–G128, D131–D152, K155–Y176, and P178–E199. Residues N212–L263 form the LRRCT 1 domain. The tract at residues N265–N314 is disordered. Residues N332 to K373 enclose the LRRNT 2 domain. LRR repeat units follow at residues N376 to D397, N400 to N421, D424 to G445, N448 to A469, K472 to G493, and S495 to D516. Positions N529–Q580 constitute an LRRCT 2 domain. A helical transmembrane segment spans residues G623–L643. Residues R644–D696 lie on the Cytoplasmic side of the membrane. Residue S695 is modified to Phosphoserine; by CK2.

This sequence belongs to the SLITRK family. Can form homodimers; homodimerization requires repeat LRR 2. Interacts with YWHAB, YWHAE, YWHAG, YWHAH, SFN, YWHAQ and YWHAZ. Post-translationally, undergoes proteolytic cleavage that results in shedding of the ectodomain and cleavage of the C-terminal cytoplasmic tail. Glycosylated. Phosphorylation at Ser-695 is necessary for proper function in promoting neurite outgrowth. In terms of tissue distribution, expressed predominantly in the frontal lobe of the cerebral cortex of the brain. Also expressed in some astrocytic brain tumors such as astrocytomas, oligodendrogliomas, glioblastomas, gangliogliomas and primitive neuroectodermal tumors.

The protein resides in the membrane. The protein localises to the secreted. Its subcellular location is the synapse. In terms of biological role, it is involved in synaptogenesis and promotes excitatory synapse differentiation. Enhances neuronal dendrite outgrowth. The sequence is that of SLIT and NTRK-like protein 1 (SLITRK1) from Homo sapiens (Human).